Consider the following 332-residue polypeptide: Adenosine receptor A2b (332 aa).

The Extracellular segment spans residues 1–8 (MLLETQDA). Residues 9 to 33 (LYVALELVIAALSVAGNVLVCAAVG) form a helical membrane-spanning segment. The Cytoplasmic portion of the chain corresponds to 34–43 (TANTLQTPTN). The helical transmembrane segment at 44-67 (YFLVSLAAADVAVGLFAIPFAITI) threads the bilayer. Topologically, residues 68–78 (SLGFCTDFYGC) are extracellular. A disulfide bond links C78 and C171. Residues 79-101 (LFLACFVLVLTQSSIFSLLAVAV) form a helical membrane-spanning segment. Residues 102–121 (DRYLAICVPLRYKSLVTGTR) lie on the Cytoplasmic side of the membrane. A helical transmembrane segment spans residues 122–144 (ARGVIAVLWVLAFGIGLTPFLGW). Residues 145 to 178 (NSKDSATNNCTEPWDGTTNESCCLVKCLFENVVP) are Extracellular-facing. N153 and N163 each carry an N-linked (GlcNAc...) asparagine glycan. E174 is an adenosine binding site. The helical transmembrane segment at 179–203 (MSYMVYFNFFGCVLPPLLIMLVIYI) threads the bilayer. Residues 204 to 235 (KIFLVACRQLQRTELMDHSRTTLQREIHAAKS) are Cytoplasmic-facing. A helical membrane pass occupies residues 236 to 259 (LAMIVGIFALCWLPVHAVNCVTLF). N254 lines the adenosine pocket. Residues 260–267 (QPAQGKNK) are Extracellular-facing. A helical transmembrane segment spans residues 268–291 (PKWAMNMAILLSHANSVVNPIVYA). Adenosine-binding residues include S279 and H280. At 292 to 332 (YRNRDFRYTFHKIISRYLLCQADVKSGNGQAGVQPALGVGL) the chain is on the cytoplasmic side. C311 is lipidated: S-palmitoyl cysteine.

Belongs to the G-protein coupled receptor 1 family.

It localises to the cell membrane. In terms of biological role, receptor for adenosine. The activity of this receptor is mediated by G proteins which activate adenylyl cyclase. This Homo sapiens (Human) protein is Adenosine receptor A2b (ADORA2B).